The sequence spans 385 residues: Glucans biosynthesis protein C (385 aa).

The next 10 membrane-spanning stretches (helical) occupy residues 17-37 (AWLM…SHTW), 60-80 (MLVF…RYPL), 91-111 (VGIP…IMLQ), 137-157 (ISHL…VWIF), 173-193 (KFSM…YAVI), 212-232 (FIVM…LAFI), 239-259 (LFTT…VAYL), 274-294 (TESV…FSFG), 311-331 (ASLF…AYIT), and 338-358 (WLGF…LYEI).

It belongs to the acyltransferase 3 family. OpgC subfamily.

Its subcellular location is the cell membrane. Its pathway is glycan metabolism; osmoregulated periplasmic glucan (OPG) biosynthesis. In terms of biological role, necessary for the succinyl substitution of periplasmic glucans. Could catalyze the transfer of succinyl residues from the cytoplasmic side of the membrane to the nascent glucan backbones on the periplasmic side of the membrane. The protein is Glucans biosynthesis protein C of Shigella boydii serotype 4 (strain Sb227).